A 199-amino-acid polypeptide reads, in one-letter code: Ribonuclease HII (199 aa).

An RNase H type-2 domain is found at 7 to 196 (PWVCGVDEAG…VRELMANEKD (190 aa)). A divalent metal cation is bound by residues D13, E14, and D105.

It belongs to the RNase HII family. The cofactor is Mn(2+). Mg(2+) serves as cofactor.

The protein resides in the cytoplasm. The enzyme catalyses Endonucleolytic cleavage to 5'-phosphomonoester.. Functionally, endonuclease that specifically degrades the RNA of RNA-DNA hybrids. This is Ribonuclease HII from Nitrosospira multiformis (strain ATCC 25196 / NCIMB 11849 / C 71).